Here is a 192-residue protein sequence, read N- to C-terminus: UPF0312 protein PFLU_5725 (192 aa).

The signal sequence occupies residues 1–23 (MLKKTLAALAIGTALLSAGQVMA).

Belongs to the UPF0312 family. Type 1 subfamily.

Its subcellular location is the periplasm. In Pseudomonas fluorescens (strain SBW25), this protein is UPF0312 protein PFLU_5725.